The sequence spans 245 residues: Ribonuclease PH (245 aa).

Phosphate contacts are provided by residues arginine 86 and 124-126; that span reads GTR.

It belongs to the RNase PH family. Homohexameric ring arranged as a trimer of dimers.

The enzyme catalyses tRNA(n+1) + phosphate = tRNA(n) + a ribonucleoside 5'-diphosphate. Its function is as follows. Phosphorolytic 3'-5' exoribonuclease that plays an important role in tRNA 3'-end maturation. Removes nucleotide residues following the 3'-CCA terminus of tRNAs; can also add nucleotides to the ends of RNA molecules by using nucleoside diphosphates as substrates, but this may not be physiologically important. Probably plays a role in initiation of 16S rRNA degradation (leading to ribosome degradation) during starvation. In Bacillus mycoides (strain KBAB4) (Bacillus weihenstephanensis), this protein is Ribonuclease PH.